Here is a 520-residue protein sequence, read N- to C-terminus: Catalase easC (520 aa).

Residue His-71 is part of the active site. A heme-binding site is contributed by Tyr-361.

This sequence belongs to the catalase family. The cofactor is heme.

The protein operates within alkaloid biosynthesis; ergot alkaloid biosynthesis. Functionally, catalase; part of the gene cluster that mediates the biosynthesis of fumiclavanine C, a fungal ergot alkaloid. DmaW catalyzes the first step of ergot alkaloid biosynthesis by condensing dimethylallyl diphosphate (DMAP) and tryptophan to form 4-dimethylallyl-L-tryptophan. The second step is catalyzed by the methyltransferase easF that methylates 4-dimethylallyl-L-tryptophan in the presence of S-adenosyl-L-methionine, resulting in the formation of 4-dimethylallyl-L-abrine. The catalase easC and the FAD-dependent oxidoreductase easE then transform 4-dimethylallyl-L-abrine to chanoclavine-I which is further oxidized by EasD in the presence of NAD(+), resulting in the formation of chanoclavine-I aldehyde. EasA reduces chanoclavine-I aldehyde to dihydrochanoclavine-I aldehyde that spontaneously dehydrates to form 6,8-dimethyl-6,7-didehydroergoline. EasG then catalyzes the reduction of 6,8-dimethyl-6,7-didehydroergoline to form festuclavine. Hydrolysis of festuclavine by easM then leads to the formation of fumigaclavine B which is in turn acetylated by easN to fumigaclavine A. Finally, easL catalyzes the conversion of fumigaclavine A into fumigaclavine C by attaching a dimethylallyl moiety to C-2 of the indole nucleus. The chain is Catalase easC from Aspergillus fumigatus (strain ATCC MYA-4609 / CBS 101355 / FGSC A1100 / Af293) (Neosartorya fumigata).